The sequence spans 447 residues: Trigger factor (447 aa).

The 86-residue stretch at Gly159–Pro244 folds into the PPIase FKBP-type domain.

This sequence belongs to the FKBP-type PPIase family. Tig subfamily.

The protein localises to the cytoplasm. The enzyme catalyses [protein]-peptidylproline (omega=180) = [protein]-peptidylproline (omega=0). Involved in protein export. Acts as a chaperone by maintaining the newly synthesized protein in an open conformation. Functions as a peptidyl-prolyl cis-trans isomerase. The chain is Trigger factor from Dehalococcoides mccartyi (strain ATCC BAA-2100 / JCM 16839 / KCTC 5957 / BAV1).